The primary structure comprises 121 residues: Large ribosomal subunit protein uL18 (121 aa).

Belongs to the universal ribosomal protein uL18 family. In terms of assembly, part of the 50S ribosomal subunit; part of the 5S rRNA/L5/L18/L25 subcomplex. Contacts the 5S and 23S rRNAs.

In terms of biological role, this is one of the proteins that bind and probably mediate the attachment of the 5S RNA into the large ribosomal subunit, where it forms part of the central protuberance. The chain is Large ribosomal subunit protein uL18 from Spiroplasma kunkelii.